Here is a 157-residue protein sequence, read N- to C-terminus: Cysteine protease Nivulian-2 (157 aa).

This sequence belongs to the intron maturase 2 family. MatK subfamily. Monomer. In terms of processing, glycosylated. Accumulates in latex (at protein level).

With respect to regulation, inhibited by HgCl(2), iodoacetamide (IAA) and, to a far lesser extent, by SDS, hydrogen peroxide H(1)O(2), KCl, NaCl, ZnCl(2), AgSO(4), CdCl(2), FeCl(3), PMSF, Pepstatin A and EDTA. Repressed moderately by many organic solvents such as diethyl ether, ethy lacetate, acetophenone, butanol, trichloroethylene, tetrahydrofuran, methanol, chloroform and dichloromethane, and, to a lesser extent, by propanol, benzyl alcohol and chlorobenzene. Functionally, cysteine protease inducing milk clotting by cleaving casein. Exhibits biomedical activities such as wound healing, haemostatic and antibacterial activity, as well as agricultural application in biocontrol process against the infectious management of the root knot nematode Meloidogyne incognita. The protein is Cysteine protease Nivulian-2 of Euphorbia nivulia (Leafy milk hedge).